We begin with the raw amino-acid sequence, 410 residues long: Serine hydroxymethyltransferase (410 aa).

(6S)-5,6,7,8-tetrahydrofolate contacts are provided by residues L119 and G123–L125. Residue K228 is modified to N6-(pyridoxal phosphate)lysine. S351 to F353 serves as a coordination point for (6S)-5,6,7,8-tetrahydrofolate.

Belongs to the SHMT family. In terms of assembly, homodimer. The cofactor is pyridoxal 5'-phosphate.

It localises to the cytoplasm. It carries out the reaction (6R)-5,10-methylene-5,6,7,8-tetrahydrofolate + glycine + H2O = (6S)-5,6,7,8-tetrahydrofolate + L-serine. Its pathway is one-carbon metabolism; tetrahydrofolate interconversion. It participates in amino-acid biosynthesis; glycine biosynthesis; glycine from L-serine: step 1/1. Catalyzes the reversible interconversion of serine and glycine with tetrahydrofolate (THF) serving as the one-carbon carrier. This reaction serves as the major source of one-carbon groups required for the biosynthesis of purines, thymidylate, methionine, and other important biomolecules. Also exhibits THF-independent aldolase activity toward beta-hydroxyamino acids, producing glycine and aldehydes, via a retro-aldol mechanism. The polypeptide is Serine hydroxymethyltransferase (Clostridium perfringens (strain ATCC 13124 / DSM 756 / JCM 1290 / NCIMB 6125 / NCTC 8237 / Type A)).